Consider the following 300-residue polypeptide: Protoheme IX farnesyltransferase (300 aa).

Helical transmembrane passes span 24 to 44 (VTQL…PGMV), 48 to 68 (VLLG…AINC), 94 to 114 (LQIL…LYTF), 118 to 138 (LTIW…TLLL), 146 to 166 (IVIG…AVTG), 172 to 192 (AWIL…VLAL), 217 to 237 (LHIL…FISG), 239 to 259 (SGAV…AYAW), and 278 to 298 (IVYL…RPVI).

Belongs to the UbiA prenyltransferase family. Protoheme IX farnesyltransferase subfamily.

Its subcellular location is the cell inner membrane. The enzyme catalyses heme b + (2E,6E)-farnesyl diphosphate + H2O = Fe(II)-heme o + diphosphate. It functions in the pathway porphyrin-containing compound metabolism; heme O biosynthesis; heme O from protoheme: step 1/1. Its function is as follows. Converts heme B (protoheme IX) to heme O by substitution of the vinyl group on carbon 2 of heme B porphyrin ring with a hydroxyethyl farnesyl side group. This is Protoheme IX farnesyltransferase from Burkholderia mallei (strain NCTC 10247).